The sequence spans 442 residues: Histidine--tRNA ligase (442 aa).

This sequence belongs to the class-II aminoacyl-tRNA synthetase family. Homodimer.

It localises to the cytoplasm. It carries out the reaction tRNA(His) + L-histidine + ATP = L-histidyl-tRNA(His) + AMP + diphosphate + H(+). The protein is Histidine--tRNA ligase (hisS) of Helicobacter pylori (strain J99 / ATCC 700824) (Campylobacter pylori J99).